We begin with the raw amino-acid sequence, 347 residues long: MRSLLLLFGGRSQEHSVSYASARALLEHICDEWTVIPVGITKHGDFVYCSTVSEQDYGEVIDNGNRVVWPSRAGCKKIEVVQARGKSFFVEFDLVFPLLHGVFGEDGTIQGMLDLLDIPYVGSGVFASAAAMDKHYTKILCSHAGIPVLPWYLIKGHAWHKNRDSFLKQISDRFTFPLFVKPVDAGSSFGCTFVDFFEQLPVAIEHALQHGKSAIVEPALDAPEVFCSLIENNGVLQCSELVFVKHSGSKFYDYSAKYLNPVEFVIPAQFDNTDGYAEIASKVFFELGCRHYARIDFFVTESGLVLNEINTSPGLTQKSIFPSSFKSMQYSQVIETILASAYCQVKR.

The ATP-grasp domain maps to 138–339 (KILCSHAGIP…YSQVIETILA (202 aa)). ATP is bound at residue 171–226 (SDRFTFPLFVKPVDAGSSFGCTFVDFFEQLPVAIEHALQHGKSAIVEPALDAPEVF). Positions 296, 308, and 310 each coordinate Mg(2+).

It belongs to the D-alanine--D-alanine ligase family. The cofactor is Mg(2+). It depends on Mn(2+) as a cofactor.

It is found in the cytoplasm. The enzyme catalyses 2 D-alanine + ATP = D-alanyl-D-alanine + ADP + phosphate + H(+). It functions in the pathway cell wall biogenesis; peptidoglycan biosynthesis. Its function is as follows. Cell wall formation. This is D-alanine--D-alanine ligase from Tropheryma whipplei (strain TW08/27) (Whipple's bacillus).